Reading from the N-terminus, the 274-residue chain is Cyclase-like protein 1 (274 aa).

Positions 1–18 (MAASRLALLLLVLAVAAA) are cleaved as a signal peptide.

It belongs to the Cyclase 1 superfamily. In terms of tissue distribution, highly expressed in leaf sheaths. Expressed in leaf collars.

It localises to the secreted. The protein localises to the extracellular space. Its subcellular location is the extracellular matrix. Functionally, may be involved in response to stresses. The polypeptide is Cyclase-like protein 1 (Oryza sativa subsp. japonica (Rice)).